Here is a 136-residue protein sequence, read N- to C-terminus: Histone H3.2 (136 aa).

Residues 1–43 (MARTKQTARKSTGGKAPRKQLATKAARKSAPATGGVKKPHRFR) are disordered. N6,N6,N6-trimethyllysine; alternate is present on residues Lys-5 and Lys-10. Residues Lys-5 and Lys-10 each carry the N6,N6-dimethyllysine; alternate modification. N6-methyllysine; alternate is present on residues Lys-5 and Lys-10. Position 10 is an N6-acetyllysine; alternate (Lys-10). Phosphoserine is present on Ser-11. Thr-12 is modified (phosphothreonine). At Lys-15 the chain carries N6-acetyllysine. An N6-methyllysine; alternate mark is found at Lys-19, Lys-24, and Lys-28. An N6-acetyllysine; alternate mark is found at Lys-19 and Lys-24. Lys-28 is subject to N6,N6,N6-trimethyllysine; alternate. Position 28 is an N6,N6-dimethyllysine; alternate (Lys-28). At Ser-29 the chain carries Phosphoserine. Position 37 is an N6,N6,N6-trimethyllysine; alternate (Lys-37). Residue Lys-37 is modified to N6,N6-dimethyllysine; alternate. Position 37 is an N6-methyllysine; alternate (Lys-37).

It belongs to the histone H3 family. As to quaternary structure, the nucleosome is a histone octamer containing two molecules each of H2A, H2B, H3 and H4 assembled in one H3-H4 heterotetramer and two H2A-H2B heterodimers. The octamer wraps approximately 147 bp of DNA. In terms of processing, acetylation is generally linked to gene activation. Can be acetylated to form H3K9ac, H3K14ac, H3K18ac and H3K23ac. H3K9ac could compete with H3K9me and prevent gene silencing. H3K9ac is restricted to euchromatin. Methylated to form mainly H3K4me, H3K9me, H3K18me, H3K23me, H3K27me and H3K36me. H3K4me1/2/3, H3K9me3, H3K27me3 and H3K36me1/2/3 are typical marks for euchromatin, whereas heterochromatic chromocenters are enriched in H3K9me1/2 and H3K27me1/2. H2BK143ub1 is probably prerequisite for H3K4me. Post-translationally, can be phosphorylated to form H3S10ph, H3T11ph and H3S28ph.

It is found in the nucleus. The protein localises to the chromosome. Core component of nucleosome. Nucleosomes wrap and compact DNA into chromatin, limiting DNA accessibility to the cellular machineries which require DNA as a template. Histones thereby play a central role in transcription regulation, DNA repair, DNA replication and chromosomal stability. DNA accessibility is regulated via a complex set of post-translational modifications of histones, also called histone code, and nucleosome remodeling. This is Histone H3.2 from Brassica napus (Rape).